A 221-amino-acid chain; its full sequence is Deoxyribose-phosphate aldolase (221 aa).

Aspartate 90 serves as the catalytic Proton donor/acceptor. The active-site Schiff-base intermediate with acetaldehyde is the lysine 152. Lysine 181 acts as the Proton donor/acceptor in catalysis.

Belongs to the DeoC/FbaB aldolase family. DeoC type 1 subfamily.

It localises to the cytoplasm. The enzyme catalyses 2-deoxy-D-ribose 5-phosphate = D-glyceraldehyde 3-phosphate + acetaldehyde. Its pathway is carbohydrate degradation; 2-deoxy-D-ribose 1-phosphate degradation; D-glyceraldehyde 3-phosphate and acetaldehyde from 2-deoxy-alpha-D-ribose 1-phosphate: step 2/2. Catalyzes a reversible aldol reaction between acetaldehyde and D-glyceraldehyde 3-phosphate to generate 2-deoxy-D-ribose 5-phosphate. This is Deoxyribose-phosphate aldolase from Syntrophotalea carbinolica (strain DSM 2380 / NBRC 103641 / GraBd1) (Pelobacter carbinolicus).